A 333-amino-acid chain; its full sequence is Leucine carboxyl methyltransferase 1 (333 aa).

S-adenosyl-L-methionine-binding positions include lysine 42, arginine 82, glycine 107, aspartate 131, aspartate 181–leucine 182, and glutamate 208.

The protein belongs to the methyltransferase superfamily. LCMT family.

It catalyses the reaction [phosphatase 2A protein]-C-terminal L-leucine + S-adenosyl-L-methionine = [phosphatase 2A protein]-C-terminal L-leucine methyl ester + S-adenosyl-L-homocysteine. Methylates the carboxyl group of the C-terminal leucine residue of protein phosphatase 2A catalytic subunits to form alpha-leucine ester residues. This is Leucine carboxyl methyltransferase 1 from Caenorhabditis elegans.